The following is an 88-amino-acid chain: ATP synthase subunit 9, mitochondrial (88 aa).

A run of 2 helical transmembrane segments spans residues 8–28 and 45–72; these read IGAG…GNVF and LFGY…LILF.

Belongs to the ATPase C chain family. F-type ATPases have 2 components, CF(1) - the catalytic core - and CF(0) - the membrane proton channel. CF(1) has five subunits: alpha(3), beta(3), gamma(1), delta(1), epsilon(1). CF(0) has three main subunits: a, b and c.

Its subcellular location is the mitochondrion membrane. It carries out the reaction ATP + H2O + 4 H(+)(in) = ADP + phosphate + 5 H(+)(out). Functionally, this protein is one of the chains of the nonenzymatic membrane component (F0) of mitochondrial ATPase. In Beta vulgaris (Sugar beet), this protein is ATP synthase subunit 9, mitochondrial (ATP9).